Here is a 157-residue protein sequence, read N- to C-terminus: SsrA-binding protein (157 aa).

The segment at 133-157 is disordered; the sequence is LHDKRETEKKRDWSREKGRLLRARG. The segment covering 135 to 151 has biased composition (basic and acidic residues); the sequence is DKRETEKKRDWSREKGR.

This sequence belongs to the SmpB family.

It is found in the cytoplasm. Functionally, required for rescue of stalled ribosomes mediated by trans-translation. Binds to transfer-messenger RNA (tmRNA), required for stable association of tmRNA with ribosomes. tmRNA and SmpB together mimic tRNA shape, replacing the anticodon stem-loop with SmpB. tmRNA is encoded by the ssrA gene; the 2 termini fold to resemble tRNA(Ala) and it encodes a 'tag peptide', a short internal open reading frame. During trans-translation Ala-aminoacylated tmRNA acts like a tRNA, entering the A-site of stalled ribosomes, displacing the stalled mRNA. The ribosome then switches to translate the ORF on the tmRNA; the nascent peptide is terminated with the 'tag peptide' encoded by the tmRNA and targeted for degradation. The ribosome is freed to recommence translation, which seems to be the essential function of trans-translation. This Bradyrhizobium diazoefficiens (strain JCM 10833 / BCRC 13528 / IAM 13628 / NBRC 14792 / USDA 110) protein is SsrA-binding protein.